Reading from the N-terminus, the 88-residue chain is Apolipoprotein C-I (88 aa).

Residues 1-26 (MRLFLSLPVWVAVLAMVLEGPAPAQA) form the signal peptide.

Belongs to the apolipoprotein C1 family.

It is found in the secreted. Inhibitor of lipoprotein binding to the low density lipoprotein (LDL) receptor, LDL receptor-related protein, and very low density lipoprotein (VLDL) receptor. Associates with high density lipoproteins (HDL) and the triacylglycerol-rich lipoproteins in the plasma and makes up about 10% of the protein of the VLDL and 2% of that of HDL. Appears to interfere directly with fatty acid uptake and is also the major plasma inhibitor of cholesteryl ester transfer protein (CETP). Binds free fatty acids and reduces their intracellular esterification. Modulates the interaction of APOE with beta-migrating VLDL and inhibits binding of beta-VLDL to the LDL receptor-related protein. In Ursus maritimus (Polar bear), this protein is Apolipoprotein C-I (APOC1).